The sequence spans 59 residues: Large ribosomal subunit protein bL32 (59 aa).

Residues 35-59 (EAHLRHHISPNGYYRGRKVVKTKND) are disordered. The segment covering 49-59 (RGRKVVKTKND) has biased composition (basic residues).

It belongs to the bacterial ribosomal protein bL32 family.

In Polynucleobacter asymbioticus (strain DSM 18221 / CIP 109841 / QLW-P1DMWA-1) (Polynucleobacter necessarius subsp. asymbioticus), this protein is Large ribosomal subunit protein bL32.